We begin with the raw amino-acid sequence, 263 residues long: Regulatory protein RecX (263 aa).

The protein belongs to the RecX family.

It localises to the cytoplasm. Modulates RecA activity. The protein is Regulatory protein RecX of Bacillus pumilus (strain SAFR-032).